The chain runs to 124 residues: Ribonuclease P protein component (124 aa).

It belongs to the RnpA family. Consists of a catalytic RNA component (M1 or rnpB) and a protein subunit.

The enzyme catalyses Endonucleolytic cleavage of RNA, removing 5'-extranucleotides from tRNA precursor.. Functionally, RNaseP catalyzes the removal of the 5'-leader sequence from pre-tRNA to produce the mature 5'-terminus. It can also cleave other RNA substrates such as 4.5S RNA. The protein component plays an auxiliary but essential role in vivo by binding to the 5'-leader sequence and broadening the substrate specificity of the ribozyme. The chain is Ribonuclease P protein component from Maridesulfovibrio salexigens (strain ATCC 14822 / DSM 2638 / NCIMB 8403 / VKM B-1763) (Desulfovibrio salexigens).